The sequence spans 419 residues: Methyltransferase/ribosomally synthesized type I borosin cyclic peptide precursor gjuMa (419 aa).

The segment at 1-255 is methyltransferase domain; the sequence is MATPIATTTN…AISTLYVPPR (255 aa). Residues Arg-79, Tyr-83, and Tyr-105 contribute to the active site. 8 residues coordinate S-adenosyl-L-methionine: Tyr-105, His-107, Val-110, Ala-137, Gln-179, Gly-217, Ser-248, and Thr-249. Residues 256 to 381 form a clasp domain region; the sequence is DISPVDPTMA…GAVYALMSRP (126 aa). Residues 382 to 404 are precursor leader; it reads TGDIAREKELTNDEIANNHGAPY. The residue at position 408 (Ser-408) is an N-methylserine. Ala-409 bears the N-methylalanine mark. At Val-410 the chain carries N-methylvaline. N-methylisoleucine is present on residues Ile-411 and Ile-412. Ala-413 and Ala-414 each carry N-methylalanine. N-methylisoleucine occurs at positions 415 and 416.

It in the N-terminal section; belongs to the precorrin methyltransferase family. Homodimer. GjuMA automethylates at Ser-408, Ala-409, Val-410, Ile-411, Ile-412, Ala-413, Ala-414, Ile-415 and Ile-416 before being processed by ae prolyloligopeptidase which likely forms a peptidyl ester upon removal of the follower propeptide, which then undergoes macrocyclization with the N-terminus of the modified core peptide. Peptide backbone alpha-N-methylations change the physicochemical properties of amide bonds to provide structural constraints and other favorable characteristics including biological membrane permeability to peptides.

It participates in secondary metabolite biosynthesis. In terms of biological role, fusion protein of the methyltransferase gjuM and the type I borosin core peptide; part of the gene cluster that mediates the biosynthesis of a type I borosin, a highly methylated cyclic peptide with potent biological activities. Type I borosins derive from the C-terminus of the fusion protein, and it is the same protein that methylates its own C-terminus using S-adenosyl methionine (SAM). The C-terminus is subsequently cleaved off and macrocyclized by a prolyloligopeptidase to give the final product. The chain is Methyltransferase/ribosomally synthesized type I borosin cyclic peptide precursor gjuMa from Gymnopilus junonius (Spectacular rustgill mushroom).